The chain runs to 499 residues: MEVSSRPPSNFDPGNYVEVSDPSTHLPSKVVIQDITTELHCPLCNDWFRDPLMLTCGHNFCQACIQNYWKMQAKETFCPECKMLCQYSNCTFNLVLEKLVEKIKRLPLLKGHPQCPEHGENLKLFSKPDGKMICFQCKDARLSMGQSKDFLQISEAVRFFTEELAIYQSQLQTTLKELQSLRTMQKDAIAAYKDNKIQLQQNLSLEFLKLHQFLHNKEKDILNDLRDEGKVLNEEMDANLNQIQEQCLLAKDMLANIQARMEQQNSFDFLTDITKLLENMEKGMKTLVPRQLISKKLSLGRFKGPIQYTIWREMQSILSPGPSQLTLDPKTAHPNLVLSNSRTSVCHGDVKQVMPDDPERFDSSVAVLGSKGFTSGKWYWEIEVAKKTKWTIGIVRESIIRKGSCPLTPEQGFWLLRLRNQTDLKALDLPSCSLNLGDLRRVGVYLDYEGGQVSFYNATNMTHLYTFTSVFLEKLFPYLCPCLNDGGENKEPLHIVHPQ.

Residues 1 to 152 form a necessary for nuclear localization region; sequence MEVSSRPPSN…SMGQSKDFLQ (152 aa). The RING-type zinc finger occupies 41–82; the sequence is CPLCNDWFRDPLMLTCGHNFCQACIQNYWKMQAKETFCPECK. Residues 160 to 265 are a coiled coil; sequence FTEELAIYQS…NIQARMEQQN (106 aa). The B30.2/SPRY domain occupies 305-499; that stretch reads PIQYTIWREM…KEPLHIVHPQ (195 aa). S341 is subject to Phosphoserine.

The protein belongs to the TRIM/RBCC family. Homo-multimer; required for antiviral activity. Interacts with PML. In terms of processing, phosphorylated. Phosphorylation is necessary for nuclear localization.

The protein resides in the cytoplasm. It localises to the nucleus. Its subcellular location is the nucleus speckle. It is found in the cytoskeleton. The protein localises to the microtubule organizing center. The protein resides in the centrosome. The catalysed reaction is S-ubiquitinyl-[E2 ubiquitin-conjugating enzyme]-L-cysteine + [acceptor protein]-L-lysine = [E2 ubiquitin-conjugating enzyme]-L-cysteine + N(6)-ubiquitinyl-[acceptor protein]-L-lysine.. Its pathway is protein modification; protein ubiquitination. In terms of biological role, E3 ubiquitin ligase that plays an important role in antiviral immunity by restricting different viral infections including dengue virus or vesicular stomatitis indiana virus. Ubiquitinates viral proteins such as dengue virus NS3 thereby limiting infection. In addition, acts as a key mediator of type I interferon induced microtubule stabilization by directly associating to microtubules independently of its E3 ligase activity. Also plays a role in cataract formation together with TP53. Mechanistically, inhibits UVB-induced cell apoptosis and reactive oxygen species (ROS) production by inducing TP53 ubiquitination. Regulates centrosome dynamics and mitotic progression by ubiquitinating STK3/MST2; leading to its redistribution to the perinuclear cytoskeleton and subsequent phosphorylation by PLK1. The protein is E3 ubiquitin-protein ligase TRIM69 (Trim69) of Rattus norvegicus (Rat).